We begin with the raw amino-acid sequence, 136 residues long: Protein PsiE homolog (136 aa).

4 consecutive transmembrane segments (helical) span residues 15-35 (AMQT…IVFL), 58-78 (VEGL…VKYF), 83-103 (HFPL…LIII), and 108-128 (PMAV…LWLC).

The protein belongs to the PsiE family.

The protein resides in the cell inner membrane. The polypeptide is Protein PsiE homolog (Klebsiella pneumoniae (strain 342)).